Here is a 150-residue protein sequence, read N- to C-terminus: Putative FAD-linked sulfhydryl oxidase 088R (150 aa).

The 105-residue stretch at 24-128 folds into the ERV/ALR sulfhydryl oxidase domain; that stretch reads GPFGPSGFGP…VTLQKAICIY (105 aa). Cys74 and Cys77 are joined by a disulfide.

Requires FAD as cofactor.

The enzyme catalyses 2 R'C(R)SH + O2 = R'C(R)S-S(R)CR' + H2O2. Functionally, FAD-dependent sulfhydryl oxidase that catalyzes disulfide bond formation. In Dryophytes versicolor (chameleon treefrog), this protein is Putative FAD-linked sulfhydryl oxidase 088R.